The chain runs to 446 residues: N-succinylarginine dihydrolase (446 aa).

Substrate-binding positions include 19 to 28 (AGLSFGNVAS), asparagine 110, and 137 to 138 (HR). Residue glutamate 174 is part of the active site. Arginine 213 contributes to the substrate binding site. Residue histidine 249 is part of the active site. Aspartate 251 and asparagine 364 together coordinate substrate. Cysteine 370 functions as the Nucleophile in the catalytic mechanism.

The protein belongs to the succinylarginine dihydrolase family. Homodimer.

It carries out the reaction N(2)-succinyl-L-arginine + 2 H2O + 2 H(+) = N(2)-succinyl-L-ornithine + 2 NH4(+) + CO2. It participates in amino-acid degradation; L-arginine degradation via AST pathway; L-glutamate and succinate from L-arginine: step 2/5. In terms of biological role, catalyzes the hydrolysis of N(2)-succinylarginine into N(2)-succinylornithine, ammonia and CO(2). This is N-succinylarginine dihydrolase from Burkholderia cenocepacia (strain ATCC BAA-245 / DSM 16553 / LMG 16656 / NCTC 13227 / J2315 / CF5610) (Burkholderia cepacia (strain J2315)).